The chain runs to 339 residues: Meiotic recombination protein rec7 (339 aa).

May be involved primarily in the early steps of meiotic recombination. In Schizosaccharomyces pombe (strain 972 / ATCC 24843) (Fission yeast), this protein is Meiotic recombination protein rec7 (rec7).